We begin with the raw amino-acid sequence, 569 residues long: Urease subunit beta (569 aa).

Residues 131-569 (GGIDTHIHFI…VSLAQLFSIF (439 aa)) form the Urease domain. Ni(2+) contacts are provided by His-136, His-138, and Lys-219. Residue Lys-219 is modified to N6-carboxylysine. His-221 provides a ligand contact to substrate. 2 residues coordinate Ni(2+): His-248 and His-274. The active-site Proton donor is His-322. Asp-362 provides a ligand contact to Ni(2+).

Belongs to the metallo-dependent hydrolases superfamily. Urease alpha subunit family. Heterohexamer of 3 UreA (alpha) and 3 UreB (beta) subunits. The cofactor is Ni cation. Carboxylation allows a single lysine to coordinate two nickel ions.

It localises to the cytoplasm. It carries out the reaction urea + 2 H2O + H(+) = hydrogencarbonate + 2 NH4(+). It participates in nitrogen metabolism; urea degradation; CO(2) and NH(3) from urea (urease route): step 1/1. The sequence is that of Urease subunit beta from Helicobacter pylori (strain HPAG1).